A 303-amino-acid chain; its full sequence is 1-phosphofructokinase (303 aa).

248–249 lines the ATP pocket; sequence GD. The active-site Proton acceptor is the aspartate 249.

Belongs to the carbohydrate kinase PfkB family.

It carries out the reaction beta-D-fructose 1-phosphate + ATP = beta-D-fructose 1,6-bisphosphate + ADP + H(+). In terms of biological role, catalyzes the ATP-dependent phosphorylation of fructose-l-phosphate to fructose-l,6-bisphosphate. The sequence is that of 1-phosphofructokinase (fruK) from Bacillus subtilis (strain 168).